The primary structure comprises 643 residues: Threonine--tRNA ligase (643 aa).

In terms of domain architecture, TGS spans methionine 1–threonine 61. The interval aspartate 243–proline 534 is catalytic. Zn(2+) is bound by residues cysteine 334, histidine 385, and histidine 511.

This sequence belongs to the class-II aminoacyl-tRNA synthetase family. Homodimer. Requires Zn(2+) as cofactor.

The protein resides in the cytoplasm. It carries out the reaction tRNA(Thr) + L-threonine + ATP = L-threonyl-tRNA(Thr) + AMP + diphosphate + H(+). Its function is as follows. Catalyzes the attachment of threonine to tRNA(Thr) in a two-step reaction: L-threonine is first activated by ATP to form Thr-AMP and then transferred to the acceptor end of tRNA(Thr). Also edits incorrectly charged L-seryl-tRNA(Thr). This Actinobacillus pleuropneumoniae serotype 5b (strain L20) protein is Threonine--tRNA ligase.